The chain runs to 164 residues: UPF0225 protein Shewmr4_2054 (164 aa).

The protein belongs to the UPF0225 family.

This Shewanella sp. (strain MR-4) protein is UPF0225 protein Shewmr4_2054.